The primary structure comprises 311 residues: tRNA-cytidine(32) 2-sulfurtransferase (311 aa).

Positions 47–52 (SGGKDS) match the PP-loop motif motif. [4Fe-4S] cluster contacts are provided by cysteine 122, cysteine 125, and cysteine 213.

This sequence belongs to the TtcA family. Homodimer. The cofactor is Mg(2+). It depends on [4Fe-4S] cluster as a cofactor.

It localises to the cytoplasm. It carries out the reaction cytidine(32) in tRNA + S-sulfanyl-L-cysteinyl-[cysteine desulfurase] + AH2 + ATP = 2-thiocytidine(32) in tRNA + L-cysteinyl-[cysteine desulfurase] + A + AMP + diphosphate + H(+). It functions in the pathway tRNA modification. Functionally, catalyzes the ATP-dependent 2-thiolation of cytidine in position 32 of tRNA, to form 2-thiocytidine (s(2)C32). The sulfur atoms are provided by the cysteine/cysteine desulfurase (IscS) system. The sequence is that of tRNA-cytidine(32) 2-sulfurtransferase from Salmonella dublin (strain CT_02021853).